A 65-amino-acid polypeptide reads, in one-letter code: Small ribosomal subunit protein bS21B (65 aa).

This sequence belongs to the bacterial ribosomal protein bS21 family.

This Geobacter sulfurreducens (strain ATCC 51573 / DSM 12127 / PCA) protein is Small ribosomal subunit protein bS21B.